The following is a 237-amino-acid chain: Putative HTH-type transcriptional regulator ycf28 (237 aa).

The HTH crp-type domain maps to K155 to I228. Residues H188–S207 constitute a DNA-binding region (H-T-H motif).

The protein resides in the plastid. It is found in the chloroplast. The chain is Putative HTH-type transcriptional regulator ycf28 (ycf28) from Porphyra purpurea (Red seaweed).